Reading from the N-terminus, the 680-residue chain is Outer dense fiber protein 2 (680 aa).

The disordered stretch occupies residues 27–46; sequence LPKPSATSSQKSHKRGMKGD. Phosphoserine is present on residues S68 and S69. At T87 the chain carries Phosphothreonine. S90 is modified (phosphoserine; by TSSK4). S101 and S104 each carry phosphoserine. T105 is modified (phosphothreonine). Residues S110 and S124 each carry the phosphoserine modification. K133 is covalently cross-linked (Glycyl lysine isopeptide (Lys-Gly) (interchain with G-Cter in SUMO2)). Residue S134 is modified to Phosphoserine. The stretch at 139–212 forms a coiled coil; that stretch reads QKGERQMAKR…MSKLVEAEMD (74 aa). A Phosphothreonine modification is found at T226. S256 carries the phosphoserine modification. Coiled-coil stretches lie at residues 275 to 418 and 456 to 630; these read KEDS…AEQL and EIIV…SDLR. Residues 387 to 410 are disordered; the sequence is KQKGDRDKESLKKAIRAQKERAEK. The residue at position 627 (S627) is a Phosphoserine. Positions 632 to 680 are disordered; that stretch reads RETGGDQCPEYRVPTGDCQEGGGNPPVPAAARGENTGMWDPGKAVGERH.

Belongs to the ODF2 family. Self-associates. Associates with microtubules and forms a fibrillar structure partially linked to the microtubule network. Interacts via its C-terminus with PLK1. Interacts with ODF1. Interacts with MARK4; the interaction is required for localization of ODF2 to centrioles. Interacts with TSSK4. Interacts with AKNA. Interacts with QRICH2. Interacts with CFAP58. Interacts with BBOF1. Interacts with CCDC38. Interacts with CCDC42. Post-translationally, tyrosine phosphorylated. Phosphorylated on Ser-90 by TSSK4.

The protein resides in the cytoplasm. It is found in the cytoskeleton. Its subcellular location is the microtubule organizing center. The protein localises to the centrosome. It localises to the cell projection. The protein resides in the cilium. It is found in the centriole. Its subcellular location is the spindle pole. The protein localises to the flagellum. Its function is as follows. Seems to be a major component of sperm tail outer dense fibers (ODF). ODFs are filamentous structures located on the outside of the axoneme in the midpiece and principal piece of the mammalian sperm tail and may help to maintain the passive elastic structures and elastic recoil of the sperm tail. May have a modulating influence on sperm motility. Functions as a general scaffold protein that is specifically localized at the distal/subdistal appendages of mother centrioles. Component of the centrosome matrix required for the localization of PLK1 and NIN to the centrosomes. Required for the formation and/or maintenance of normal CETN1 assembly. The polypeptide is Outer dense fiber protein 2 (ODF2) (Pongo abelii (Sumatran orangutan)).